Here is a 311-residue protein sequence, read N- to C-terminus: Homoserine kinase (311 aa).

Pro-88 to Ala-98 contacts ATP.

It belongs to the GHMP kinase family. Homoserine kinase subfamily.

The protein resides in the cytoplasm. It carries out the reaction L-homoserine + ATP = O-phospho-L-homoserine + ADP + H(+). It participates in amino-acid biosynthesis; L-threonine biosynthesis; L-threonine from L-aspartate: step 4/5. Catalyzes the ATP-dependent phosphorylation of L-homoserine to L-homoserine phosphate. The chain is Homoserine kinase from Saccharolobus islandicus (strain Y.N.15.51 / Yellowstone #2) (Sulfolobus islandicus).